The following is a 255-amino-acid chain: Pimeloyl-[acyl-carrier protein] methyl ester esterase (255 aa).

Residues 16–241 form the AB hydrolase-1 domain; that stretch reads LVLLHGWGLN…AAHAPFISHP (226 aa). Residues tryptophan 22, 81–82, and 142–146 contribute to the substrate site; these read SL and FLALQ. The active-site Nucleophile is serine 81. Residues aspartate 206 and histidine 234 contribute to the active site. Histidine 234 provides a ligand contact to substrate.

The protein belongs to the AB hydrolase superfamily. Carboxylesterase BioH family. In terms of assembly, monomer.

Its subcellular location is the cytoplasm. It carries out the reaction 6-carboxyhexanoyl-[ACP] methyl ester + H2O = 6-carboxyhexanoyl-[ACP] + methanol + H(+). It functions in the pathway cofactor biosynthesis; biotin biosynthesis. Functionally, the physiological role of BioH is to remove the methyl group introduced by BioC when the pimeloyl moiety is complete. It allows to synthesize pimeloyl-ACP via the fatty acid synthetic pathway through the hydrolysis of the ester bonds of pimeloyl-ACP esters. Also displays a weak thioesterase activity. Can form a complex with CoA, and may be involved in the condensation of CoA and pimelic acid into pimeloyl-CoA, a precursor in biotin biosynthesis. In Serratia marcescens, this protein is Pimeloyl-[acyl-carrier protein] methyl ester esterase.